The sequence spans 463 residues: L-seryl-tRNA(Sec) selenium transferase (463 aa).

Lysine 295 is modified (N6-(pyridoxal phosphate)lysine).

The protein belongs to the SelA family. As to quaternary structure, homodecamer; pentamer of dimers. Binds only one seryl-tRNA(Sec) per dimer. The cofactor is pyridoxal 5'-phosphate.

It is found in the cytoplasm. It catalyses the reaction L-seryl-tRNA(Sec) + selenophosphate + H(+) = L-selenocysteinyl-tRNA(Sec) + phosphate. It functions in the pathway aminoacyl-tRNA biosynthesis; selenocysteinyl-tRNA(Sec) biosynthesis; selenocysteinyl-tRNA(Sec) from L-seryl-tRNA(Sec) (bacterial route): step 1/1. Converts seryl-tRNA(Sec) to selenocysteinyl-tRNA(Sec) required for selenoprotein biosynthesis. The chain is L-seryl-tRNA(Sec) selenium transferase from Proteus mirabilis (strain HI4320).